The following is a 470-amino-acid chain: Uronate isomerase (470 aa).

This sequence belongs to the metallo-dependent hydrolases superfamily. Uronate isomerase family.

The enzyme catalyses D-glucuronate = D-fructuronate. It carries out the reaction aldehydo-D-galacturonate = keto-D-tagaturonate. Its pathway is carbohydrate metabolism; pentose and glucuronate interconversion. This is Uronate isomerase from Salmonella arizonae (strain ATCC BAA-731 / CDC346-86 / RSK2980).